We begin with the raw amino-acid sequence, 340 residues long: Protein RecA (340 aa).

Glycine 65–threonine 72 is a binding site for ATP.

The protein belongs to the RecA family.

It is found in the cytoplasm. In terms of biological role, can catalyze the hydrolysis of ATP in the presence of single-stranded DNA, the ATP-dependent uptake of single-stranded DNA by duplex DNA, and the ATP-dependent hybridization of homologous single-stranded DNAs. It interacts with LexA causing its activation and leading to its autocatalytic cleavage. This Thermus thermophilus (strain ATCC 27634 / DSM 579 / HB8) protein is Protein RecA.